The chain runs to 60 residues: Cytotoxin 3 (60 aa).

Disulfide bonds link C3–C21, C14–C38, C42–C53, and C54–C59.

The protein belongs to the three-finger toxin family. Short-chain subfamily. Type IA cytotoxin sub-subfamily. As to quaternary structure, monomer in solution; Homodimer and oligomer in the presence of negatively charged lipids forming a pore with a size ranging between 20 and 30 Angstroms. Expressed by the venom gland.

It localises to the secreted. It is found in the target cell membrane. Shows cytolytic activity on many different cells by forming pore in lipid membranes. In vivo, increases heart rate or kills the animal by cardiac arrest. In addition, it binds to heparin with high affinity, interacts with Kv channel-interacting protein 1 (KCNIP1) in a calcium-independent manner, and binds to integrin alpha-V/beta-3 (ITGAV/ITGB3) with moderate affinity. This Naja annulifera (Banded Egyptian cobra) protein is Cytotoxin 3.